A 333-amino-acid polypeptide reads, in one-letter code: Transcription factor TGA2.2 (333 aa).

Residues 1–14 (MADASSRTDTSTVL) are compositionally biased toward polar residues. Positions 1–48 (MADASSRTDTSTVLDTDDKNQMVDGQSGAIVPSNSSDRSDRSDKPMDQ) are disordered. Over residues 37-48 (DRSDRSDKPMDQ) the composition is skewed to basic and acidic residues. The bZIP domain occupies 47–91 (DQKVLRRLAQNREAARKSRLRKKAYVQQLESSKLKLASLEQEINK). The interval 49 to 69 (KVLRRLAQNREAARKSRLRKK) is basic motif. The tract at residues 75–89 (LESSKLKLASLEQEI) is leucine-zipper. A DOG1 domain is found at 114-330 (AMTFDLEYAR…RALSSLWLAR (217 aa)).

Belongs to the bZIP family. In terms of assembly, interacts with NPR1/NH1. Interacts with NPR3/NH3.

The protein resides in the nucleus. In terms of biological role, transcriptional regulator involved in defense response. This Oryza sativa subsp. japonica (Rice) protein is Transcription factor TGA2.2.